The primary structure comprises 270 residues: Putative phosphoenolpyruvate synthase regulatory protein (270 aa).

149–156 provides a ligand contact to ADP; that stretch reads GVSRSGKT.

The protein belongs to the pyruvate, phosphate/water dikinase regulatory protein family. PSRP subfamily.

The enzyme catalyses [pyruvate, water dikinase] + ADP = [pyruvate, water dikinase]-phosphate + AMP + H(+). It carries out the reaction [pyruvate, water dikinase]-phosphate + phosphate + H(+) = [pyruvate, water dikinase] + diphosphate. Its function is as follows. Bifunctional serine/threonine kinase and phosphorylase involved in the regulation of the phosphoenolpyruvate synthase (PEPS) by catalyzing its phosphorylation/dephosphorylation. This is Putative phosphoenolpyruvate synthase regulatory protein from Pseudoalteromonas atlantica (strain T6c / ATCC BAA-1087).